Consider the following 269-residue polypeptide: Neurotrophic factor BDNF precursor form (269 aa).

An N-terminal signal peptide occupies residues 1–18 (MTILFLTMVISYFSCMRA). A propeptide spanning residues 19-150 (APLRDAPGMR…AANMSMRVRR (132 aa)) is cleaved from the precursor. Disordered stretches follow at residues 39–61 (AATA…REEL) and 82–104 (AAHV…VATA). Asparagine 143 carries N-linked (GlcNAc...) asparagine glycosylation. Intrachain disulfides connect cysteine 163/cysteine 230, cysteine 208/cysteine 259, and cysteine 218/cysteine 261.

This sequence belongs to the NGF-beta family.

Functionally, BDNF promotes the survival of neuronal populations that are all located either in the central nervous system or directly connected to it. In Xiphophorus maculatus (Southern platyfish), this protein is Neurotrophic factor BDNF precursor form (bdnf).